Here is a 337-residue protein sequence, read N- to C-terminus: Ribonucleoside-diphosphate reductase small chain (337 aa).

Residues D85, E116, and H119 each contribute to the Fe cation site. Y123 is a catalytic residue. Positions 178, 212, and 215 each coordinate Fe cation.

Belongs to the ribonucleoside diphosphate reductase small chain family. In terms of assembly, heterodimer of a large and a small subunit. Fe cation serves as cofactor.

It carries out the reaction a 2'-deoxyribonucleoside 5'-diphosphate + [thioredoxin]-disulfide + H2O = a ribonucleoside 5'-diphosphate + [thioredoxin]-dithiol. Its function is as follows. Provides the precursors necessary for DNA synthesis. Catalyzes the biosynthesis of deoxyribonucleotides from the corresponding ribonucleotides. This is Ribonucleoside-diphosphate reductase small chain (RNR2) from Trypanosoma brucei brucei.